The following is a 619-amino-acid chain: Dihydroxy-acid dehydratase (619 aa).

Asp81 serves as a coordination point for Mg(2+). Cys122 is a [2Fe-2S] cluster binding site. Asp123 and Lys124 together coordinate Mg(2+). Lys124 is subject to N6-carboxylysine. Position 201 (Cys201) interacts with [2Fe-2S] cluster. Glu496 lines the Mg(2+) pocket. Catalysis depends on Ser522, which acts as the Proton acceptor.

The protein belongs to the IlvD/Edd family. Homodimer. [2Fe-2S] cluster is required as a cofactor. Mg(2+) serves as cofactor.

The catalysed reaction is (2R)-2,3-dihydroxy-3-methylbutanoate = 3-methyl-2-oxobutanoate + H2O. The enzyme catalyses (2R,3R)-2,3-dihydroxy-3-methylpentanoate = (S)-3-methyl-2-oxopentanoate + H2O. It participates in amino-acid biosynthesis; L-isoleucine biosynthesis; L-isoleucine from 2-oxobutanoate: step 3/4. Its pathway is amino-acid biosynthesis; L-valine biosynthesis; L-valine from pyruvate: step 3/4. Its function is as follows. Functions in the biosynthesis of branched-chain amino acids. Catalyzes the dehydration of (2R,3R)-2,3-dihydroxy-3-methylpentanoate (2,3-dihydroxy-3-methylvalerate) into 2-oxo-3-methylpentanoate (2-oxo-3-methylvalerate) and of (2R)-2,3-dihydroxy-3-methylbutanoate (2,3-dihydroxyisovalerate) into 2-oxo-3-methylbutanoate (2-oxoisovalerate), the penultimate precursor to L-isoleucine and L-valine, respectively. The sequence is that of Dihydroxy-acid dehydratase from Burkholderia vietnamiensis (strain G4 / LMG 22486) (Burkholderia cepacia (strain R1808)).